The primary structure comprises 379 residues: Cytochrome b (379 aa).

A run of 4 helical transmembrane segments spans residues 33 to 53 (FGSL…FLAM), 77 to 98 (WLIR…YLHI), 113 to 133 (WNIG…GYVL), and 178 to 198 (FFAF…IHLL). Heme b is bound by residues H83 and H97. H182 and H196 together coordinate heme b. An a ubiquinone-binding site is contributed by H201. A run of 4 helical transmembrane segments spans residues 226 to 246 (YKDL…ALFY), 288 to 308 (LGGV…PILH), 320 to 340 (ASQL…WIGG), and 347 to 367 (YIII…VLNP).

This sequence belongs to the cytochrome b family. The cytochrome bc1 complex contains 3 respiratory subunits (MT-CYB, CYC1 and UQCRFS1), 2 core proteins (UQCRC1 and UQCRC2) and probably 6 low-molecular weight proteins. The cofactor is heme b.

It localises to the mitochondrion inner membrane. Functionally, component of the ubiquinol-cytochrome c reductase complex (complex III or cytochrome b-c1 complex) that is part of the mitochondrial respiratory chain. The b-c1 complex mediates electron transfer from ubiquinol to cytochrome c. Contributes to the generation of a proton gradient across the mitochondrial membrane that is then used for ATP synthesis. In Anguilla reinhardtii (Speckled longfin eel), this protein is Cytochrome b (mt-cyb).